Reading from the N-terminus, the 121-residue chain is Flagellar protein FliT (121 aa).

The segment at 1–50 (MNNAPHLYFAWQQLVEKSQLMLRLATEEQWDELIASEMAYVNAVQEIAHL) is required for homodimerization. The fliD binding stretch occupies residues 60–98 (MQEQLRPMLHLILDNESKVKQLLQIRMDELAKLVGQSSV).

The protein belongs to the FliT family. As to quaternary structure, homodimer. Interacts with FliD and FlhC.

The protein localises to the cytoplasm. It is found in the cytosol. Dual-function protein that regulates the transcription of class 2 flagellar operons and that also acts as an export chaperone for the filament-capping protein FliD. As a transcriptional regulator, acts as an anti-FlhDC factor; it directly binds FlhC, thus inhibiting the binding of the FlhC/FlhD complex to class 2 promoters, resulting in decreased expression of class 2 flagellar operons. As a chaperone, effects FliD transition to the membrane by preventing its premature polymerization, and by directing it to the export apparatus. The protein is Flagellar protein FliT of Shigella flexneri serotype 5b (strain 8401).